Reading from the N-terminus, the 248-residue chain is ATP synthase subunit a, chloroplastic (248 aa).

5 helical membrane passes run 37-57 (AQVL…AILA), 96-116 (VPFI…GALL), 134-154 (DINT…YAGL), 200-220 (LVVA…MMFL), and 221-241 (GLFT…AYIG).

It belongs to the ATPase A chain family. As to quaternary structure, F-type ATPases have 2 components, CF(1) - the catalytic core - and CF(0) - the membrane proton channel. CF(1) has five subunits: alpha(3), beta(3), gamma(1), delta(1), epsilon(1). CF(0) has four main subunits: a, b, b' and c.

The protein resides in the plastid. It localises to the chloroplast thylakoid membrane. In terms of biological role, key component of the proton channel; it plays a direct role in the translocation of protons across the membrane. In Anthoceros angustus (Hornwort), this protein is ATP synthase subunit a, chloroplastic.